The primary structure comprises 446 residues: MPNPKKPKIAFAHLGCDKNRVDTEHMIGLLAAAGYGVGTDETEADYVIVNTCSFIQAAREESVRTLVELAEANKKIVITGCLAQHFQGELLAELPEAVAVVGSGDYQHIVEVIERVERGERVQQISAVPTYIADETVPRYRTTPAPVAYLRIAEGCDYRCAFCIIPHLRGNQRSRSLESIVSEAHQLAAEGVQEIIIVSQITTNYGLDRYGQPQLATLIRALGEVDVPWIRLHYAYPTGLTPEVIAAMRETPNILPYLDLPLQHSHPEVLRAMNRPWQAGVNDRLIERLRQELPEAVVRTTFIVGFPGETESQFEHLCQFVQRHEFDHVGVFTYSPEEGTAAYDLPHQIPEEIKRARRDRLMELQQPIAQRKNAAEVGKIVPVLIEQENPQTGEFIGRSPRFAPEVDGVVYVKGAATLGTIVPVEITAADIYDLYGIIPASVRFYP.

In terms of domain architecture, MTTase N-terminal spans 7 to 118; sequence PKIAFAHLGC…IVEVIERVER (112 aa). [4Fe-4S] cluster is bound by residues cysteine 16, cysteine 52, cysteine 81, cysteine 156, cysteine 160, and cysteine 163. Residues 142-371 form the Radical SAM core domain; the sequence is TTPAPVAYLR…MELQQPIAQR (230 aa). One can recognise a TRAM domain in the interval 374-440; the sequence is AAEVGKIVPV…IYDLYGIIPA (67 aa).

This sequence belongs to the methylthiotransferase family. RimO subfamily. Requires [4Fe-4S] cluster as cofactor.

Its subcellular location is the cytoplasm. It carries out the reaction L-aspartate(89)-[ribosomal protein uS12]-hydrogen + (sulfur carrier)-SH + AH2 + 2 S-adenosyl-L-methionine = 3-methylsulfanyl-L-aspartate(89)-[ribosomal protein uS12]-hydrogen + (sulfur carrier)-H + 5'-deoxyadenosine + L-methionine + A + S-adenosyl-L-homocysteine + 2 H(+). In terms of biological role, catalyzes the methylthiolation of an aspartic acid residue of ribosomal protein uS12. The polypeptide is Ribosomal protein uS12 methylthiotransferase RimO (Thermosynechococcus vestitus (strain NIES-2133 / IAM M-273 / BP-1)).